Reading from the N-terminus, the 246-residue chain is Mast cell protease 2 (246 aa).

An N-terminal signal peptide occupies residues 1–19 (MHRPPLPLVLLLLCCRAQA). Residues 20-21 (GE) constitute a propeptide, activation peptide. The 223-residue stretch at 22 to 244 (IIGGTESKPH…YRPWIDEVLK (223 aa)) folds into the Peptidase S1 domain. A disulfide bridge connects residues Cys51 and Cys67. Catalysis depends on charge relay system residues His66 and Asp109. An N-linked (GlcNAc...) asparagine glycan is attached at Asn120. Intrachain disulfides connect Cys143–Cys208 and Cys174–Cys187. The Charge relay system role is filled by Ser202.

Belongs to the peptidase S1 family. Granzyme subfamily.

It is found in the secreted. The protein localises to the cytoplasmic granule. Its function is as follows. Putative mast cell chymase. This Ovis aries (Sheep) protein is Mast cell protease 2.